A 264-amino-acid polypeptide reads, in one-letter code: Thymidylate synthase (264 aa).

DUMP is bound at residue Arg21. His51 is a (6R)-5,10-methylene-5,6,7,8-tetrahydrofolate binding site. Residue 126–127 (RR) coordinates dUMP. The active-site Nucleophile is Cys146. DUMP-binding positions include 166-169 (RSAD), Asn177, and 207-209 (HLY). Asp169 is a binding site for (6R)-5,10-methylene-5,6,7,8-tetrahydrofolate. Ala263 provides a ligand contact to (6R)-5,10-methylene-5,6,7,8-tetrahydrofolate.

It belongs to the thymidylate synthase family. Bacterial-type ThyA subfamily. Homodimer.

It is found in the cytoplasm. It catalyses the reaction dUMP + (6R)-5,10-methylene-5,6,7,8-tetrahydrofolate = 7,8-dihydrofolate + dTMP. It functions in the pathway pyrimidine metabolism; dTTP biosynthesis. Catalyzes the reductive methylation of 2'-deoxyuridine-5'-monophosphate (dUMP) to 2'-deoxythymidine-5'-monophosphate (dTMP) while utilizing 5,10-methylenetetrahydrofolate (mTHF) as the methyl donor and reductant in the reaction, yielding dihydrofolate (DHF) as a by-product. This enzymatic reaction provides an intracellular de novo source of dTMP, an essential precursor for DNA biosynthesis. The sequence is that of Thymidylate synthase from Mesorhizobium japonicum (strain LMG 29417 / CECT 9101 / MAFF 303099) (Mesorhizobium loti (strain MAFF 303099)).